We begin with the raw amino-acid sequence, 496 residues long: MDNKLIWLLPAIGLVVALQPSYIHPDEHFQTLEMLMIKFYGISGTVPWEFEPTNNARSYFPLYAFYGPLFYLMRDILKVQNPLNILRIIRFYNFMLYLSVLYYALPKLVNENKLQNKGRVNEALVFILSSYITWCYQCHSFSNSLETILLLLVLSNYTDILSNKAGLLQLVSTGFLISVGTFTRISFPAFLLLPSIQVFLKVLYRKWIQMVVIAVSMTLSTSIIVYFDTFMYESDEIIIAPLKNVVYNLNVDNLAKHGLHPRYTHLLVNIPLILGPGLLMIRNTKNDFLNLPLLSIISSLFFLSALRHQELRFLLPVVPLFSTLLTRFRYRPYLFRIWLVFNAAMCIIMGIFHQGGVIPMISNINAEQDLTIDIWWKTYSPPTWLYNNDILTVSTTSIVNNIENLDLVQFNVKTNHVVDLKGCDFDLVLEAIQNFRINGVKSLRLIVPNSMTSNVAALNQTYLVTKENSVFPHLDLDHLDSGIQNIIGLSEYKVSL.

A run of 3 helical transmembrane segments spans residues 5–25 (LIWL…YIHP), 56–73 (ARSY…FYLM), and 85–105 (ILRI…YYAL). N-linked (GlcNAc...) asparagine glycosylation occurs at Asn156. The next 6 membrane-spanning stretches (helical) occupy residues 174-194 (GFLI…LLLP), 207-227 (WIQM…IVYF), 261-281 (PRYT…LLMI), 286-306 (NDFL…LSAL), 311-328 (LRFL…LTRF), and 337-357 (IWLV…QGGV). Asn459 is a glycosylation site (N-linked (GlcNAc...) asparagine).

This sequence belongs to the glycosyltransferase 22 family. PIGZ subfamily.

It localises to the endoplasmic reticulum membrane. The protein operates within glycolipid biosynthesis; glycosylphosphatidylinositol-anchor biosynthesis. Functionally, alpha-1,2-mannosyltransferase involved in glycosylphosphatidylinositol-anchor biosynthesis. Transfers a fourth mannose to trimannosyl-GPIs during GPI precursor assembly. The presence of a fourth mannose in GPI is essential in fungi. The sequence is that of GPI mannosyltransferase 4 (SMP3) from Candida glabrata (strain ATCC 2001 / BCRC 20586 / JCM 3761 / NBRC 0622 / NRRL Y-65 / CBS 138) (Yeast).